The chain runs to 435 residues: Maltodextrin transport system permease protein MdxF (435 aa).

Helical transmembrane passes span 35–55 (LLFL…GIQA), 73–93 (FMLI…MFYI), 136–156 (AYIM…FVAL), 199–219 (VIWT…TALF), 234–254 (IFLF…SNMF), 293–313 (LIMI…TGVL), 337–357 (HITF…QYTF), and 403–423 (VAAA…LIAF). The 228-residue stretch at 195 to 422 (LGWTVIWTIC…FIVIGISLIA (228 aa)) folds into the ABC transmembrane type-1 domain.

The protein belongs to the binding-protein-dependent transport system permease family. MalFG subfamily. As to quaternary structure, the complex is composed of two ATP-binding proteins (MsmX), two transmembrane proteins (MdxF and MdxG) and a solute-binding protein (MdxE).

The protein localises to the cell membrane. In terms of biological role, part of the ABC transporter complex involved in maltodextrin import. Probably responsible for the translocation of the substrate across the membrane. The chain is Maltodextrin transport system permease protein MdxF (mdxF) from Bacillus subtilis (strain 168).